Here is a 379-residue protein sequence, read N- to C-terminus: tRNA (guanine(26)-N(2))-dimethyltransferase (379 aa).

Residues 1–26 (MECREITEGSTTFTAPVQDETTQFPP) form a disordered region. In terms of domain architecture, Trm1 methyltransferase spans 4–369 (REITEGSTTF…APLPLIEEKI (366 aa)). Positions 8 to 25 (EGSTTFTAPVQDETTQFP) are enriched in polar residues. Residues Arg-41, Arg-66, Asp-82, Asp-108, and Ala-109 each coordinate S-adenosyl-L-methionine. Residues Cys-237, Cys-240, Cys-257, and Cys-260 each coordinate Zn(2+).

Belongs to the class I-like SAM-binding methyltransferase superfamily. Trm1 family.

It catalyses the reaction guanosine(26) in tRNA + 2 S-adenosyl-L-methionine = N(2)-dimethylguanosine(26) in tRNA + 2 S-adenosyl-L-homocysteine + 2 H(+). Its function is as follows. Dimethylates a single guanine residue at position 26 of a number of tRNAs using S-adenosyl-L-methionine as donor of the methyl groups. The polypeptide is tRNA (guanine(26)-N(2))-dimethyltransferase (Methanocorpusculum labreanum (strain ATCC 43576 / DSM 4855 / Z)).